The following is a 161-amino-acid chain: ATP synthase subunit b (161 aa).

A helical transmembrane segment spans residues Ser-10 to Tyr-29.

The protein belongs to the ATPase B chain family. F-type ATPases have 2 components, F(1) - the catalytic core - and F(0) - the membrane proton channel. F(1) has five subunits: alpha(3), beta(3), gamma(1), delta(1), epsilon(1). F(0) has three main subunits: a(1), b(2) and c(10-14). The alpha and beta chains form an alternating ring which encloses part of the gamma chain. F(1) is attached to F(0) by a central stalk formed by the gamma and epsilon chains, while a peripheral stalk is formed by the delta and b chains.

The protein localises to the cell inner membrane. Its function is as follows. F(1)F(0) ATP synthase produces ATP from ADP in the presence of a proton or sodium gradient. F-type ATPases consist of two structural domains, F(1) containing the extramembraneous catalytic core and F(0) containing the membrane proton channel, linked together by a central stalk and a peripheral stalk. During catalysis, ATP synthesis in the catalytic domain of F(1) is coupled via a rotary mechanism of the central stalk subunits to proton translocation. Component of the F(0) channel, it forms part of the peripheral stalk, linking F(1) to F(0). This Thermosipho melanesiensis (strain DSM 12029 / CIP 104789 / BI429) protein is ATP synthase subunit b.